The following is a 378-amino-acid chain: Neutral protease 2 homolog ARB_04336 (378 aa).

The N-terminal stretch at 1-19 (MKFFTALAAVGALLAPAVA) is a signal peptide. The propeptide occupies 20 to 186 (LPTPASEASH…DYFSKGLDKR (167 aa)). Disulfide bonds link cysteine 192-cysteine 262 and cysteine 269-cysteine 287. Histidine 311 serves as a coordination point for Zn(2+). The active site involves glutamate 312. Residues histidine 315 and aspartate 326 each coordinate Zn(2+).

This sequence belongs to the peptidase M35 family. It depends on Zn(2+) as a cofactor.

The protein resides in the secreted. It carries out the reaction Preferential cleavage of bonds with hydrophobic residues in P1'. Also 3-Asn-|-Gln-4 and 8-Gly-|-Ser-9 bonds in insulin B chain.. Functionally, secreted metalloproteinase that allows assimilation of proteinaceous substrates. Shows high activities on basic nuclear substrates such as histone and protamine. May be involved in virulence. The sequence is that of Neutral protease 2 homolog ARB_04336 from Arthroderma benhamiae (strain ATCC MYA-4681 / CBS 112371) (Trichophyton mentagrophytes).